A 158-amino-acid chain; its full sequence is MAFQILLNVFLAFCWMFLSNSPSAAGFITGYILGMLSLFFFRRFFTRQFYLWKLISIIKLCFIFIKELYLANVSVMKSVLSPKLNIRPGIFAFKTELTKDWEITMLSLLITLTPGTLVMDISDDRTILYIHAMDIEDAEKAIFDIRESFEKAIQEVSR.

Transmembrane regions (helical) follow at residues 21 to 41 (SPSA…LFFF) and 51 to 71 (LWKL…LYLA).

This sequence belongs to the CPA3 antiporters (TC 2.A.63) subunit E family. Forms a heterooligomeric complex that consists of seven subunits: MrpA, MrpB, MrpC, MrpD, MrpE, MrpF and MrpG.

Its subcellular location is the cell membrane. Mrp complex is a Na(+)/H(+) antiporter that is considered to be the major Na(+) excretion system in B.subtilis. Has a major role in Na(+) resistance and a minor role in Na(+)- and K(+)-dependent pH homeostasis as compared to TetB. MrpA may be the actual Na(+)/H(+) antiporter, although the six other Mrp proteins are all required for Na(+)/H(+) antiport activity and Na(+) resistance. MrpA is required for initiation of sporulation when external Na(+) concentration increases. Also transports Li(+) but not K(+), Ca(2+) or Mg(2+). This chain is Na(+)/H(+) antiporter subunit E (mrpE), found in Bacillus subtilis (strain 168).